A 211-amino-acid polypeptide reads, in one-letter code: Arginine exporter protein ArgO (211 aa).

6 helical membrane passes run 1–21 (MISYYFQGFALGAAMILPLGP), 37–57 (LMIALLCALSDLVLISAGIFG), 68–88 (LLALVTWGGVAFLLWYGFGAL), 111–131 (IIATMLAVTWLNPHVYLDTFV), 147–167 (WFALGTISASFLWFFGLALLA), and 179–199 (AQRIINILVGVVMWLIAFQLA).

The protein belongs to the LysE/ArgO transporter (TC 2.A.75) family.

The protein localises to the cell inner membrane. The catalysed reaction is L-arginine(in) = L-arginine(out). Its function is as follows. Involved in the export of arginine. Important to control the intracellular level of arginine and the correct balance between arginine and lysine. The chain is Arginine exporter protein ArgO from Salmonella paratyphi C (strain RKS4594).